Here is a 1132-residue protein sequence, read N- to C-terminus: Telomerase reverse transcriptase (1132 aa).

Positions 1-66 (MSAKKPVQSK…NQNNANSGGN (66 aa)) are disordered. 2 stretches are compositionally biased toward polar residues: residues 9–26 (SKLN…NRST) and 45–55 (QSQNTTTGAFR). The region spanning 602 to 956 (KEMRIFCESQ…DLFHWIGISI (355 aa)) is the Reverse transcriptase domain. Residues Asp-708, Asp-886, and Asp-887 each contribute to the Mg(2+) site.

The protein belongs to the reverse transcriptase family. Telomerase subfamily.

The protein resides in the nucleus. The protein localises to the chromosome. It localises to the telomere. The enzyme catalyses DNA(n) + a 2'-deoxyribonucleoside 5'-triphosphate = DNA(n+1) + diphosphate. Functionally, telomerase is a ribonucleoprotein enzyme essential for the replication of chromosome termini in most eukaryotes. It elongates telomeres. It is a reverse transcriptase that adds simple sequence repeats to chromosome ends by copying a template sequence within the RNA component of the enzyme. This chain is Telomerase reverse transcriptase (TERT), found in Oxytricha trifallax (Sterkiella histriomuscorum).